The primary structure comprises 188 residues: Threonylcarbamoyl-AMP synthase (188 aa).

The 186-residue stretch at 3-188 (QLHPSDIKDI…RSGKILRNGQ (186 aa)) folds into the YrdC-like domain.

It belongs to the SUA5 family. TsaC subfamily.

The protein localises to the cytoplasm. It carries out the reaction L-threonine + hydrogencarbonate + ATP = L-threonylcarbamoyladenylate + diphosphate + H2O. In terms of biological role, required for the formation of a threonylcarbamoyl group on adenosine at position 37 (t(6)A37) in tRNAs that read codons beginning with adenine. Catalyzes the conversion of L-threonine, HCO(3)(-)/CO(2) and ATP to give threonylcarbamoyl-AMP (TC-AMP) as the acyladenylate intermediate, with the release of diphosphate. This Shewanella baltica (strain OS195) protein is Threonylcarbamoyl-AMP synthase.